A 583-amino-acid chain; its full sequence is PTS system lactose-specific EIICB component (583 aa).

Positions 8–409 constitute a PTS EIIC type-3 domain; that stretch reads IEKGKPFFEK…VVDVMIYYPF (402 aa). A run of 9 helical transmembrane segments spans residues 30-50, 64-84, 103-123, 137-157, 176-196, 222-242, 283-303, 339-359, and 381-401; these read GFIAAIPIILFSSIFILITYV, GILMKPYNYTMGIVGLIVAGT, INFISTMMAAMSGFLFLAADP, KGLLTAFISAFITVIVYNFFI, VFKDIFPLSAVIIIIYALDLL, GWIGVTLIFGAFAFFWFVGIH, FVATMGGTGATLVVPFMFMWL, VFFIPFIFAPIVNVWIFKFFV, and IVMGTGFAFWSFVLAIVLIVV. A compositionally biased stretch (low complexity) spans 453 to 462; that stretch reads ANETTTTESA. The tract at residues 453 to 475 is disordered; the sequence is ANETTTTESAPSDEEVSAKNSSN. The PTS EIIB type-3 domain maps to 480 to 583; it reads QTNVLVLCAG…LDFVQQQFEK (104 aa). Cys-487 serves as the catalytic Phosphocysteine intermediate; for EIIB activity. At Cys-487 the chain carries Phosphocysteine; by EIIA.

The protein localises to the cell membrane. It catalyses the reaction lactose(out) + N(pros)-phospho-L-histidyl-[protein] = lactose 6-phosphate(in) + L-histidyl-[protein]. In terms of biological role, the phosphoenolpyruvate-dependent sugar phosphotransferase system (sugar PTS), a major carbohydrate active transport system, catalyzes the phosphorylation of incoming sugar substrates concomitantly with their translocation across the cell membrane. The enzyme II LacEF PTS system is involved in lactose transport. The chain is PTS system lactose-specific EIICB component from Staphylococcus haemolyticus (strain JCSC1435).